We begin with the raw amino-acid sequence, 262 residues long: MASGIRCFRLLHPAFRSYHAALTRPVSEVSMKTVSGRQHGHRQYSAYPAVPVRHFATKKAKAKGKGQPQARVTVNRALVEDIISLEEVDEDMKSVVEALKDNFNKTLNIRTAPGSLDHITVVTADGKVALNQIGQISMKSPQVILVNMASFPECTAAAIKAIRESGMNLNPEVEGTLIRVPIPKVTREHREMLVKLAKQNTNKAKENLRKVRTNAMNKLKKSKDKTSEDTIRLIEKQISQMADDTVAELDQHLAAKTKELLG.

The N-terminal 55 residues, Met1–Phe55, are a transit peptide targeting the mitochondrion.

This sequence belongs to the RRF family.

It is found in the mitochondrion. In terms of biological role, responsible for the disassembly of ribosomes from messenger RNA at the termination of mitochondrial protein biosynthesis. Acts in collaboration with GFM2. Promotes mitochondrial ribosome recycling by dissolution of intersubunit contacts. The polypeptide is Ribosome-recycling factor, mitochondrial (Mrrf) (Mus musculus (Mouse)).